A 105-amino-acid chain; its full sequence is Large ribosomal subunit protein bL21c (105 aa).

Belongs to the bacterial ribosomal protein bL21 family. As to quaternary structure, part of the 50S ribosomal subunit.

It localises to the plastid. The protein resides in the chloroplast. Functionally, this protein binds to 23S rRNA. The sequence is that of Large ribosomal subunit protein bL21c from Phaeodactylum tricornutum (strain CCAP 1055/1).